We begin with the raw amino-acid sequence, 39 residues long: Contryphan-Cal2 (39 aa).

The first 20 residues, Met-1–Ser-20, serve as a signal peptide directing secretion. Cysteines 29 and 35 form a disulfide.

In terms of tissue distribution, expressed by the venom duct.

Its subcellular location is the secreted. Functionally, probable neurotoxin. This is Contryphan-Cal2 from Californiconus californicus (California cone).